The sequence spans 237 residues: Leucyl/phenylalanyl-tRNA--protein transferase (237 aa).

Belongs to the L/F-transferase family.

The protein localises to the cytoplasm. It carries out the reaction N-terminal L-lysyl-[protein] + L-leucyl-tRNA(Leu) = N-terminal L-leucyl-L-lysyl-[protein] + tRNA(Leu) + H(+). The catalysed reaction is N-terminal L-arginyl-[protein] + L-leucyl-tRNA(Leu) = N-terminal L-leucyl-L-arginyl-[protein] + tRNA(Leu) + H(+). It catalyses the reaction L-phenylalanyl-tRNA(Phe) + an N-terminal L-alpha-aminoacyl-[protein] = an N-terminal L-phenylalanyl-L-alpha-aminoacyl-[protein] + tRNA(Phe). Functionally, functions in the N-end rule pathway of protein degradation where it conjugates Leu, Phe and, less efficiently, Met from aminoacyl-tRNAs to the N-termini of proteins containing an N-terminal arginine or lysine. The protein is Leucyl/phenylalanyl-tRNA--protein transferase of Shewanella baltica (strain OS185).